The sequence spans 284 residues: Bifunctional protein FolD (284 aa).

Residues 166–168 (GRS) and serine 191 each bind NADP(+).

Belongs to the tetrahydrofolate dehydrogenase/cyclohydrolase family. As to quaternary structure, homodimer.

The enzyme catalyses (6R)-5,10-methylene-5,6,7,8-tetrahydrofolate + NADP(+) = (6R)-5,10-methenyltetrahydrofolate + NADPH. The catalysed reaction is (6R)-5,10-methenyltetrahydrofolate + H2O = (6R)-10-formyltetrahydrofolate + H(+). It functions in the pathway one-carbon metabolism; tetrahydrofolate interconversion. Its function is as follows. Catalyzes the oxidation of 5,10-methylenetetrahydrofolate to 5,10-methenyltetrahydrofolate and then the hydrolysis of 5,10-methenyltetrahydrofolate to 10-formyltetrahydrofolate. This chain is Bifunctional protein FolD, found in Leptospira interrogans serogroup Icterohaemorrhagiae serovar copenhageni (strain Fiocruz L1-130).